A 77-amino-acid chain; its full sequence is Putative neurotoxin 1 (77 aa).

The signal sequence occupies residues 1–25 (MKAFIAILSIAIVLLLIVSIKETSA). Positions 26–46 (KDCKQECVKRYTKGDLTNFLK) are excised as a propeptide.

The protein belongs to the scolopendra neurotoxin 3 family. In terms of processing, contains 2 disulfide bonds. As to expression, expressed by the venom gland.

The protein localises to the secreted. This is Putative neurotoxin 1 from Scolopendra mutilans (Chinese red-headed centipede).